Reading from the N-terminus, the 331-residue chain is uncharacterized protein (331 aa).

Belongs to the IIV-6 335L family.

This is an uncharacterized protein from Invertebrate iridescent virus 6 (IIV-6).